Consider the following 143-residue polypeptide: MFMGEFEHSVDTKGRLIIPAKFREQLGEQFVVTRGMDGCLFGYPMTEWTALQEKLKALPVNRKDARAFVRFFYSAATECELDKQGRINLPKSLRDHAALTKQCVIVGVANRFEIWSAERWNDFSTKAEEDFDDIAENLIDFGM.

SpoVT-AbrB domains follow at residues 5–47 and 76–119; these read EFEH…PMTE and ATEC…SAER.

Belongs to the MraZ family. Forms oligomers.

The protein resides in the cytoplasm. Its subcellular location is the nucleoid. The sequence is that of Transcriptional regulator MraZ from Levilactobacillus brevis (strain ATCC 367 / BCRC 12310 / CIP 105137 / JCM 1170 / LMG 11437 / NCIMB 947 / NCTC 947) (Lactobacillus brevis).